The sequence spans 492 residues: Aspartyl/glutamyl-tRNA(Asn/Gln) amidotransferase subunit B (492 aa).

Belongs to the GatB/GatE family. GatB subfamily. In terms of assembly, heterotrimer of A, B and C subunits.

It catalyses the reaction L-glutamyl-tRNA(Gln) + L-glutamine + ATP + H2O = L-glutaminyl-tRNA(Gln) + L-glutamate + ADP + phosphate + H(+). The catalysed reaction is L-aspartyl-tRNA(Asn) + L-glutamine + ATP + H2O = L-asparaginyl-tRNA(Asn) + L-glutamate + ADP + phosphate + 2 H(+). Allows the formation of correctly charged Asn-tRNA(Asn) or Gln-tRNA(Gln) through the transamidation of misacylated Asp-tRNA(Asn) or Glu-tRNA(Gln) in organisms which lack either or both of asparaginyl-tRNA or glutaminyl-tRNA synthetases. The reaction takes place in the presence of glutamine and ATP through an activated phospho-Asp-tRNA(Asn) or phospho-Glu-tRNA(Gln). The chain is Aspartyl/glutamyl-tRNA(Asn/Gln) amidotransferase subunit B from Dehalococcoides mccartyi (strain CBDB1).